Consider the following 689-residue polypeptide: Beta-adrenergic receptor kinase 1 (689 aa).

The interval 1–190 is N-terminal; sequence MADLEAVLAD…ELNIHLTMND (190 aa). Residues 54 to 175 form the RGS domain; that stretch reads TFEKIFSQKL…IESEKFTRFC (122 aa). Residues 191-453 enclose the Protein kinase domain; it reads FSVHRIIGRG…AQEVKEDPFF (263 aa). ATP contacts are provided by residues 197–205 and Lys-220; that span reads IGRGGFGEV. Asp-317 functions as the Proton acceptor in the catalytic mechanism. An AGC-kinase C-terminal domain is found at 454–521; the sequence is KAVDWQMVLL…TISERWQQEV (68 aa). Residues 558–652 enclose the PH domain; it reads DCIMHGYMSK…WKKELRDVYR (95 aa). The tract at residues 665 to 689 is disordered; the sequence is KNKPRSPVVELSKMPLTQRGSANGL. Position 670 is a phosphoserine (Ser-670).

This sequence belongs to the protein kinase superfamily. AGC Ser/Thr protein kinase family. GPRK subfamily. As to quaternary structure, interacts with the heterodimer formed by GNB1 and GNG2. Interacts with GIT1. Interacts with, and phosphorylates chemokine-stimulated CCR5. Interacts with ARRB1. Interacts with LPAR1 and LPAR2. Interacts with RALA in response to LPAR1 activation. ADRBK1 and RALA mutually inhibit each other's binding to LPAR1. Interacts with ADRB2.

The protein resides in the cytoplasm. It is found in the cell membrane. The protein localises to the postsynapse. It localises to the presynapse. The enzyme catalyses [beta-adrenergic receptor] + ATP = [beta-adrenergic receptor]-phosphate + ADP + H(+). With respect to regulation, in contrast to other AGC family kinases, the catalytic activity is solely regulated by the binding of substrates and ligands, not by phosphorylation of the kinase domain. Its function is as follows. Specifically phosphorylates the agonist-occupied form of the beta-adrenergic and closely related receptors, probably inducing a desensitization of them. Does not act on HTR1B/5-hydroxytryptamine 1B receptor. Key regulator of LPAR1 signaling. Competes with RALA for binding to LPAR1 thus affecting the signaling properties of the receptor. Desensitizes LPAR1 and LPAR2 in a phosphorylation-independent manner. Inhibits relaxation of airway smooth muscle in response to blue light. This chain is Beta-adrenergic receptor kinase 1, found in Didelphis virginiana (North American opossum).